Here is a 1370-residue protein sequence, read N- to C-terminus: MRNIGVFSVILFSFLAISLKAQNSNFVFKSFTPIDGLSQSSVIDIEQDKIGQLWVGTRDGLNKFDGHTFKIYRNNPEDSTSISNSDILSIAEDRSGMLWVGTYNGLNKYNPETNRFQRYFHSNESTSLPSNTIWKLKEIKNEIWIGTLNGLAIYNKKTEGFTSVLSDEKNKSSLPGLFVTSIFESTNGDIWVGTDNGLCKLISRNAEQISFQTINYKKNKDIRPYKLHVKDIIEDKNHNLWVATKNSGLYMIKANTTTLISYQNTPDFKDVNLDIRAINFDKHNNLWIGTYSGIFILKSDGDVQHIGKKSSDYSGLNKIKTIFTDKHGSVWAGSYYGGLHLWDESNSNFINFNQNSKSLRLSYNVVGSIAASKDSLVFFGTEGGGITQYNFKSDESIYINSENTKGFLSDNIKSLKIVDDALWVGSFNTLPFLYDYNTKTVRTNNFPDELKNIFIESSVYFTEKENDSIIWFGTFGSGAIRYNTETKNYIQLTTEPEGLYSLTNNRVRTLFIDSKQRVWLGTQSGLNVMALSNIDKEKIPIKQFFFDSELISGVDILTVFEDSNRNIWVGTKASGFYVYKGETFEKVDIQHNGVKVNSVHSVLEDAYKNLWLSSNQGLVKYNLNTKNITIYDQTDGLISNEYNDNSSLNFNNDTFYFGGPAGVVSFQPDQISLNNYNPQVILTDFRIKNESVPIGGDQAILTKDIAFTKAIDLDYNNANFSIRFAIPNFINGSNNQYAYRMLGLEEAWNVTSNTEANYIIQQAGNYTFEVKGANNDDVWNEQPTILNITVHPAPWRSWWAFCLYALCIGTALIALISFLKSKAKLKHKLALESIEKQRNEEINQAKLQFFTNISHEFRTPLTLILGPLQQVLLDYKGSNKVYKKLLVIENSANHLLQLINRLMDFRKLENSQFNLQAAEGNIVKFLKEIYFSFSEYAKNGNYTYTFESESDVINVYYDRSKLERVFYNLISNAFRYTPEGGNITLKITTDSKYIYIDINDSGVGISDEFKTKIFNRFFEVPIHNQPQKNYNKGSGIGLSIAKNIAELHKGTIRLVHKERPGTIFRVSLPLGRGHLQDSEIISDFKLSDDISQYEIQLETLPVLDEDSIEDLITEKEKSTILIVEDHKPLRVFIKNLLKHDYNILEAENGKIALKLAQQNLPSLIISDVIMPEMVGTELCSKIKEDIKTSHIPVVLLTSRSSLIYKFEGLESGADEYISKPFNVKEFRLRIKNILENRMRLKAKFSNAKHITPSEITISSIDEQLLKKAFKIVEDNMANEQFDVLAFSQELGVSRTTLFNKIKAWTNFTPNEFIQEIRLKRAAQLLETNKINISQISYQVGFKSPKYFSKCFQKKFNETPSQYQNRYSEQF.

The N-terminal stretch at 1 to 20 is a signal peptide; it reads MRNIGVFSVILFSFLAISLK. The chain crosses the membrane as a helical span at residues 799-819; sequence WAFCLYALCIGTALIALISFL. The Histidine kinase domain maps to 852 to 1072; the sequence is NISHEFRTPL…IFRVSLPLGR (221 aa). Position 855 is a phosphohistidine; by autocatalysis (His855). One can recognise a Response regulatory domain in the interval 1119 to 1234; it reads TILIVEDHKP…EFRLRIKNIL (116 aa). Asp1167 is modified (4-aspartylphosphate). One can recognise an HTH araC/xylS-type domain in the interval 1266–1365; the sequence is KKAFKIVEDN…NETPSQYQNR (100 aa). DNA-binding regions (H-T-H motif) lie at residues 1284 to 1305 and 1332 to 1355; these read LAFS…KAWT and ISQI…QKKF.

Autophosphorylated. Activation requires a sequential transfer of a phosphate group from a His in the primary transmitter domain, to an Asp in the receiver domain and to a His in the secondary transmitter domain.

It localises to the membrane. Its subcellular location is the cell surface. The enzyme catalyses ATP + protein L-histidine = ADP + protein N-phospho-L-histidine.. Functionally, histidine kinase probably involved in ulvan degradation. Ulvan is the main polysaccharide component of the Ulvales (green seaweed) cell wall. It is composed of disaccharide building blocks comprising 3-sulfated rhamnose (Rha3S) linked to D-glucuronic acid (GlcA), L-iduronic acid (IduA), or D-xylose (Xyl). The polypeptide is Histidine kinase P4 (Formosa agariphila (strain DSM 15362 / KCTC 12365 / LMG 23005 / KMM 3901 / M-2Alg 35-1)).